A 351-amino-acid polypeptide reads, in one-letter code: Purine permease 3 (351 aa).

The next 10 helical transmembrane spans lie at 4–24 (ALVIINCIILAIGNCGGPLIM), 35–55 (IWFSTFLETAGFPVIFIPLLF), 72–92 (FFLIKPRLLIAAVIVGILSGF), 108–128 (TAALIIASQLAFIAIFSFFMV), 132–152 (FTPFTINAVVLLTVGAAVLGM), 168–188 (ITGFLITVAAAVMYAFILPLV), 207–227 (FQLILCLLASIVSVIGMFIAG), 249–269 (VAVFSAIIWQGFFLGAIGLIF), 274–294 (LVSGIMISVLLPITEVLAVIF), and 304–324 (GLSLALSLWGFVSYFYGEIKS). The region spanning 45–152 (GFPVIFIPLL…LTVGAAVLGM (108 aa)) is the EamA domain. The disordered stretch occupies residues 329-351 (RRIQQEESQETEQSSLSRPISEC).

This sequence belongs to the purine permeases (TC 2.A.7.14) family. Restricted to pollen.

It localises to the membrane. Its function is as follows. May be involved in transport of purine derivatives during pollen germination and tube elongation. This chain is Purine permease 3 (PUP3), found in Arabidopsis thaliana (Mouse-ear cress).